The following is a 121-amino-acid chain: Protein yippee-like 5 (121 aa).

The Yippee domain occupies 13 to 110; sequence RLFSCANCDT…LERALVRESE (98 aa). 4 residues coordinate Zn(2+): Cys-17, Cys-20, Cys-73, and Cys-76. The residue at position 118 (Ser-118) is a Phosphoserine.

The protein belongs to the yippee family. Identified in the CTLH complex that contains GID4, RANBP9 and/or RANBP10, MKLN1, MAEA, RMND5A (or alternatively its paralog RMND5B), GID8, ARMC8, WDR26 and YPEL5. Within this complex, MAEA, RMND5A (or alternatively its paralog RMND5B), GID8, WDR26, and RANBP9 and/or RANBP10 form the catalytic core, while GID4, MKLN1, ARMC8 and YPEL5 have ancillary roles. Interacts with RANBP9 and RANBP10.

The protein resides in the nucleus. The protein localises to the cytoplasm. It localises to the cytoskeleton. It is found in the microtubule organizing center. Its subcellular location is the centrosome. The protein resides in the spindle pole. The protein localises to the midbody. In terms of biological role, component of the CTLH E3 ubiquitin-protein ligase complex that selectively accepts ubiquitin from UBE2H and mediates ubiquitination and subsequent proteasomal degradation of the transcription factor HBP1. Required for normal cell proliferation. This is Protein yippee-like 5 (YPEL5) from Bos taurus (Bovine).